The chain runs to 420 residues: Phosphoribosylamine--glycine ligase (420 aa).

Residues 108–314 (KQFMEKYAIP…FAALIDALLH (207 aa)) form the ATP-grasp domain. Residue 134–195 (LDERGVPIVI…EDFLAGEEFS (62 aa)) coordinates ATP. Mg(2+) contacts are provided by E284 and N286.

It belongs to the GARS family. Mg(2+) is required as a cofactor. Mn(2+) serves as cofactor.

It carries out the reaction 5-phospho-beta-D-ribosylamine + glycine + ATP = N(1)-(5-phospho-beta-D-ribosyl)glycinamide + ADP + phosphate + H(+). Its pathway is purine metabolism; IMP biosynthesis via de novo pathway; N(1)-(5-phospho-D-ribosyl)glycinamide from 5-phospho-alpha-D-ribose 1-diphosphate: step 2/2. The chain is Phosphoribosylamine--glycine ligase from Listeria monocytogenes serotype 4b (strain F2365).